The sequence spans 445 residues: MDSIILKNHQKKPIEFMKNNRGVILYHSTGAGKTLTAIYSVYQFDYPIIIIGPKSSKKAFTDNIEKAGMDISRFTFYTYTKIKMILESDITIFKNMSVIVDEAHSLRNENMYNLYISSALMLASKIILLTATPVVNYFNDLAVLVNIVRGEDSLPTERALFDQMFYDEETMTLINAPILFNKLLNTISYYKIIDTINYPTSESHIKQVEMDHLQIDEYKYYIKQILYSNENVPDNVDIFNINYGLLPSKKRNFFLNVTRQLSNVAKIADTSPKIEDIMKYIISGPYPIVIYSNFLKSGIYTLAVRLEKENISYKIISGFVSQDKLNMIVNNYNNGLFKVLLISSAGSESLDLKNTHQVHIMEPHWNESKIIQVIGRSIRYGSHISLPQNERKVDIYRWISIFPNQYRNISADEYLTTLSQRKMELWNKYNQIVIDASIENNYFAK.

Residues isoleucine 14–glutamate 151 form the Helicase ATP-binding domain. Histidine 27–threonine 34 is an ATP binding site. Residues aspartate 101–histidine 104 carry the DEAH box motif. Positions lysine 273 to tyrosine 442 constitute a Helicase C-terminal domain.

It belongs to the DEAD box helicase family. DEAH subfamily.

It is found in the virion. It catalyses the reaction ATP + H2O = ADP + phosphate + H(+). This Acanthamoeba polyphaga mimivirus (APMV) protein is Putative ATP-dependent RNA helicase L538.